Reading from the N-terminus, the 187-residue chain is Peptidoglycan-recognition protein 2 (187 aa).

The first 19 residues, 1 to 19 (MKAFLVALVVAIELTLVFA), serve as a signal peptide directing secretion. Cystine bridges form between Cys-21–Cys-144 and Cys-58–Cys-64. The N-acetylmuramoyl-L-alanine amidase domain occupies 43 to 170 (KPLKYVIIHH…RTVRPTDSPG (128 aa)).

It belongs to the N-acetylmuramoyl-L-alanine amidase 2 family. Localizes to plasma (at protein level).

Its subcellular location is the secreted. In terms of biological role, peptidoglycan-recognition protein probably involved in innate immunity by binding to peptidoglycans (PGN) of bacteria and activating the prophenoloxidase (proPO) cascade immune response. Binds to 1,3-beta-D-glucan and PGN. The chain is Peptidoglycan-recognition protein 2 (PGRP-2) from Holotrichia diomphalia (Korean black chafer).